Here is a 275-residue protein sequence, read N- to C-terminus: MSDEVTYATLMLQDSARVRGNQDGNNLRKEGHPAQSSLWRGAALSLMTLCLVLVTGLVTLATMFLQVSNDINSDSEKLSQLQKSIHPQQDNLSESLNSSRKSLTEESLQSQISALLERQEQMATKLCKEFLIHASDHKCNPCPKTWQWYGNSCYYFSINEEKSWSDSRKDCIDKNATLVKIDSTEERDLLQSQLSLTFSFFWLGLSWNSSGRNWLWEDGSFPPPTLFSDKELASFNGSRDCAYFERGNIYASRCSAEIPWICEKTASLVKTEDLD.

Over 1-41 the chain is Cytoplasmic; the sequence is MSDEVTYATLMLQDSARVRGNQDGNNLRKEGHPAQSSLWRG. Residues 5–10 carry the ITIM motif motif; the sequence is VTYATL. Tyrosine 7 is subject to Phosphotyrosine. Residues 42-64 form a helical; Signal-anchor for type II membrane protein membrane-spanning segment; that stretch reads AALSLMTLCLVLVTGLVTLATMF. At 65 to 275 the chain is on the extracellular side; sequence LQVSNDINSD…ASLVKTEDLD (211 aa). N-linked (GlcNAc...) asparagine glycans are attached at residues asparagine 91, asparagine 175, and asparagine 236. Positions 149 to 263 constitute a C-type lectin domain; sequence YGNSCYYFSI…CSAEIPWICE (115 aa). 2 disulfides stabilise this stretch: cysteine 171-cysteine 262 and cysteine 241-cysteine 254.

As to quaternary structure, homodimer. Interacts (via ITIM motif) with PTPN6. Interacts (via ITIM motif) with PTPN11; this interaction triggers dephosphorylation and activation of PTPN11.

It localises to the cell membrane. In terms of biological role, inhibitory receptor postulated to negatively regulate immune and non-immune functions. Upon phosphorylation, recruits SH2 domain-containing PTPN6 and PTPN11 phosphatases to its ITIM motif and antagonizes activation signals. Although it inhibits KLRK1/NKG2D-mediated signaling, it does not bind known ligands of KLRK1/NKG2D and therefore is not its inhibitory counterpart. May limit activation of myeloid cell subsets in response to infection or tissue inflammation. May protect target cells against natural killer cell-mediated lysis. May negatively regulate cell cycle and differentiation of melanocytes via inactivation of STAT3. The chain is C-type lectin domain family 12 member B (Clec12b) from Mus musculus (Mouse).